The following is a 531-amino-acid chain: T-complex protein 1 subunit zeta (531 aa).

The residue at position 2 (Ala-2) is an N-acetylalanine. At Lys-5 the chain carries N6-acetyllysine. Gly-39 serves as a coordination point for ADP. Position 39 (Gly-39) interacts with ATP. Asp-90 provides a ligand contact to Mg(2+). Residues Gly-91, Thr-92, Thr-93, Ser-94, Thr-158, and Lys-159 each contribute to the ADP site. Positions 91, 92, and 93 each coordinate ATP. An N6-acetyllysine modification is found at Lys-199. Ser-205 is subject to Phosphoserine. Residue Lys-251 forms a Glycyl lysine isopeptide (Lys-Gly) (interchain with G-Cter in SUMO2) linkage. Lys-287, Lys-365, Lys-377, and Lys-388 each carry N6-acetyllysine. Ala-411 is a binding site for ADP. Residues Ala-411, Gly-412, Asp-496, and Lys-501 each contribute to the ATP site. Asp-496 provides a ligand contact to ADP.

Belongs to the TCP-1 chaperonin family. Component of the chaperonin-containing T-complex (TRiC), a hexadecamer composed of two identical back-to-back stacked rings enclosing a protein folding chamber. Each ring is made up of eight different subunits: TCP1/CCT1, CCT2, CCT3, CCT4, CCT5, CCT6A/CCT6, CCT7, CCT8. Interacts with PACRG.

Its subcellular location is the cytoplasm. The enzyme catalyses ATP + H2O = ADP + phosphate + H(+). Functionally, component of the chaperonin-containing T-complex (TRiC), a molecular chaperone complex that assists the folding of actin, tubulin and other proteins upon ATP hydrolysis. The TRiC complex mediates the folding of WRAP53/TCAB1, thereby regulating telomere maintenance. In Homo sapiens (Human), this protein is T-complex protein 1 subunit zeta (CCT6A).